Reading from the N-terminus, the 90-residue chain is DNA-binding protein HRm (90 aa).

It belongs to the bacterial histone-like protein family.

Histone-like DNA-binding protein which is capable of wrapping DNA to stabilize it, and thus to prevent its denaturation under extreme environmental conditions. This is DNA-binding protein HRm (hupB) from Rhizobium meliloti (strain 1021) (Ensifer meliloti).